A 529-amino-acid polypeptide reads, in one-letter code: UDP-glucuronosyltransferase 2B33 (529 aa).

The signal sequence occupies residues Met-1 to Gly-24. N-linked (GlcNAc...) asparagine glycans are attached at residues Asn-67 and Asn-68. A helical transmembrane segment spans residues Ile-494–Phe-514.

The protein belongs to the UDP-glycosyltransferase family.

The protein resides in the microsome membrane. It localises to the endoplasmic reticulum membrane. It catalyses the reaction glucuronate acceptor + UDP-alpha-D-glucuronate = acceptor beta-D-glucuronoside + UDP + H(+). UDPGTs are of major importance in the conjugation and subsequent elimination of potentially toxic xenobiotics and endogenous compounds. This isozyme has glucuronidating capacity on estriol and does not catalyze the glucuronidation of beta-estradiol. Capable of conjugating 4-hydroxyestrone, androsterone, diclofenac, and hyodeoxycholic acid. In Macaca mulatta (Rhesus macaque), this protein is UDP-glucuronosyltransferase 2B33 (UGT2B33).